The sequence spans 284 residues: 4-diphosphocytidyl-2-C-methyl-D-erythritol kinase (284 aa).

Residue K14 is part of the active site. 98-108 contacts ATP; the sequence is PMGGGLGGGSS. The active site involves D140.

This sequence belongs to the GHMP kinase family. IspE subfamily.

The catalysed reaction is 4-CDP-2-C-methyl-D-erythritol + ATP = 4-CDP-2-C-methyl-D-erythritol 2-phosphate + ADP + H(+). The protein operates within isoprenoid biosynthesis; isopentenyl diphosphate biosynthesis via DXP pathway; isopentenyl diphosphate from 1-deoxy-D-xylulose 5-phosphate: step 3/6. Its function is as follows. Catalyzes the phosphorylation of the position 2 hydroxy group of 4-diphosphocytidyl-2C-methyl-D-erythritol. The chain is 4-diphosphocytidyl-2-C-methyl-D-erythritol kinase from Shewanella baltica (strain OS155 / ATCC BAA-1091).